Reading from the N-terminus, the 222-residue chain is N-(5'-phosphoribosyl)anthranilate isomerase (222 aa).

This sequence belongs to the TrpF family.

The enzyme catalyses N-(5-phospho-beta-D-ribosyl)anthranilate = 1-(2-carboxyphenylamino)-1-deoxy-D-ribulose 5-phosphate. It functions in the pathway amino-acid biosynthesis; L-tryptophan biosynthesis; L-tryptophan from chorismate: step 3/5. The sequence is that of N-(5'-phosphoribosyl)anthranilate isomerase from Rhizobium etli (strain CIAT 652).